The chain runs to 223 residues: MQRAARPLVSVSDLDADKAAALKLIPIPSALEARLDAYVALLQQWQAKTNLVAPSTLPQLWTRHVADSLQLVSLMPHARRWLDFGSGGGFPGVVLACAMADVGGHVTLVERIAKKAAFLREALRVAGAPGTVILADIGDNVDRFPQALDCITARAVAPLHQLIGFAEPLMTPGTTKALFLKGQDVDAELTETTKYWKFQPKLHASVTGGQGWIVEIDHIERRT.

Residues G85, F90, and R154 each coordinate S-adenosyl-L-methionine.

This sequence belongs to the methyltransferase superfamily. RNA methyltransferase RsmG family.

The protein localises to the cytoplasm. It carries out the reaction guanosine(527) in 16S rRNA + S-adenosyl-L-methionine = N(7)-methylguanosine(527) in 16S rRNA + S-adenosyl-L-homocysteine. Functionally, specifically methylates the N7 position of guanine in position 527 of 16S rRNA. The sequence is that of Ribosomal RNA small subunit methyltransferase G from Rhodopseudomonas palustris (strain ATCC BAA-98 / CGA009).